A 75-amino-acid chain; its full sequence is Rugosin-LK2 (75 aa).

The signal sequence occupies residues 1–24 (MFTMKKSLLFLFFLGTISLSFCEG). Positions 25 to 40 (ERSADEDDEGEMTEEE) are excised as a propeptide.

Expressed by the skin glands.

The protein resides in the secreted. Has antimicrobial activity against Gram-positive bacteria S.aureus ATCC 2592 (MIC=10.0 uM), S.aureus ATCC 43300 (MIC=10.0 uM) and B.subtilis (MIC=30.0 uM), against Gram-negative bacteria E.coli ML-35P (MIC=10.0 uM), P.aeruginosa PA01 (MIC=2.5 uM) and P.aeruginosa ATCC 27853 (MIC=2.5 uM) and against fungus C.albicans ATCC 2002 (MIC=10.0 uM). In Limnonectes kuhlii (Kuhl's Creek frog), this protein is Rugosin-LK2.